Reading from the N-terminus, the 238-residue chain is Ribonuclease PH (238 aa).

Phosphate is bound by residues arginine 86 and 124-126; that span reads GTR.

This sequence belongs to the RNase PH family. Homohexameric ring arranged as a trimer of dimers.

It carries out the reaction tRNA(n+1) + phosphate = tRNA(n) + a ribonucleoside 5'-diphosphate. Functionally, phosphorolytic 3'-5' exoribonuclease that plays an important role in tRNA 3'-end maturation. Removes nucleotide residues following the 3'-CCA terminus of tRNAs; can also add nucleotides to the ends of RNA molecules by using nucleoside diphosphates as substrates, but this may not be physiologically important. Probably plays a role in initiation of 16S rRNA degradation (leading to ribosome degradation) during starvation. This Edwardsiella ictaluri (strain 93-146) protein is Ribonuclease PH.